The chain runs to 154 residues: Xanthine-guanine phosphoribosyltransferase (154 aa).

5-phospho-alpha-D-ribose 1-diphosphate-binding positions include 37-38 (RG), R69, and 88-96 (DDLVDSGDT). Residue R69 participates in GMP binding. Position 89 (D89) interacts with Mg(2+). The guanine site is built by D92 and I135. Xanthine-binding residues include D92 and I135. Residues 92–96 (DSGDT) and 134–135 (WI) each bind GMP.

This sequence belongs to the purine/pyrimidine phosphoribosyltransferase family. XGPT subfamily. In terms of assembly, homotetramer. Requires Mg(2+) as cofactor.

Its subcellular location is the cell inner membrane. The enzyme catalyses GMP + diphosphate = guanine + 5-phospho-alpha-D-ribose 1-diphosphate. It carries out the reaction XMP + diphosphate = xanthine + 5-phospho-alpha-D-ribose 1-diphosphate. The catalysed reaction is IMP + diphosphate = hypoxanthine + 5-phospho-alpha-D-ribose 1-diphosphate. The protein operates within purine metabolism; GMP biosynthesis via salvage pathway; GMP from guanine: step 1/1. It participates in purine metabolism; XMP biosynthesis via salvage pathway; XMP from xanthine: step 1/1. Its function is as follows. Purine salvage pathway enzyme that catalyzes the transfer of the ribosyl-5-phosphate group from 5-phospho-alpha-D-ribose 1-diphosphate (PRPP) to the N9 position of the 6-oxopurines guanine and xanthine to form the corresponding ribonucleotides GMP (guanosine 5'-monophosphate) and XMP (xanthosine 5'-monophosphate), with the release of PPi. To a lesser extent, also acts on hypoxanthine. The chain is Xanthine-guanine phosphoribosyltransferase from Vibrio cholerae serotype O1 (strain ATCC 39541 / Classical Ogawa 395 / O395).